Consider the following 176-residue polypeptide: Ribosome rescue factor SmrB (176 aa).

Residues 98–173 enclose the Smr domain; that stretch reads LDLHGLTQKQ…GTAALLLLIE (76 aa).

It belongs to the SmrB family. In terms of assembly, associates with collided ribosomes, but not with correctly translating polysomes.

Its function is as follows. Acts as a ribosome collision sensor. Detects stalled/collided disomes (pairs of ribosomes where the leading ribosome is stalled and a second ribosome has collided with it) and endonucleolytically cleaves mRNA at the 5' boundary of the stalled ribosome. Stalled/collided disomes form a new interface (primarily via the 30S subunits) that binds SmrB. Cleaved mRNA becomes available for tmRNA ligation, leading to ribosomal subunit dissociation and rescue of stalled ribosomes. This Yersinia pseudotuberculosis serotype O:1b (strain IP 31758) protein is Ribosome rescue factor SmrB.